Here is a 142-residue protein sequence, read N- to C-terminus: Large ribosomal subunit protein uL13 (142 aa).

It belongs to the universal ribosomal protein uL13 family. Part of the 50S ribosomal subunit.

In terms of biological role, this protein is one of the early assembly proteins of the 50S ribosomal subunit, although it is not seen to bind rRNA by itself. It is important during the early stages of 50S assembly. This chain is Large ribosomal subunit protein uL13, found in Treponema denticola (strain ATCC 35405 / DSM 14222 / CIP 103919 / JCM 8153 / KCTC 15104).